We begin with the raw amino-acid sequence, 1179 residues long: RecBCD enzyme subunit RecB (1179 aa).

The segment at 1 to 859 is DNA-binding and helicase activity, interacts with RecC; that stretch reads MVYSDTKTSK…IIQNGKCMNY (859 aa). The UvrD-like helicase ATP-binding domain maps to 18–459; sequence NIMKKKLNIF…YYLDTNWRSS (442 aa). 39–46 contacts ATP; that stretch reads ASAGTGKT. A UvrD-like helicase C-terminal domain is found at 485-755; the sequence is EPILSSSKNL…RIITIHKSKG (271 aa). Residues 910 to 1179 are nuclease activity, interacts with RecD and RecA; sequence YSQITSFTKI…KLTKLILQKK (270 aa). The Mg(2+) site is built by His962, Asp1073, and Asp1086. The For nuclease activity role is filled by Asp1086.

Belongs to the helicase family. UvrD subfamily. Heterotrimer of RecB, RecC and RecD. All subunits contribute to DNA-binding. Interacts with RecA. The cofactor is Mg(2+).

The enzyme catalyses Exonucleolytic cleavage (in the presence of ATP) in either 5'- to 3'- or 3'- to 5'-direction to yield 5'-phosphooligonucleotides.. The catalysed reaction is Couples ATP hydrolysis with the unwinding of duplex DNA by translocating in the 3'-5' direction.. It carries out the reaction ATP + H2O = ADP + phosphate + H(+). Its function is as follows. A helicase/nuclease that prepares dsDNA breaks (DSB) for recombinational DNA repair. Binds to DSBs and unwinds DNA via a highly rapid and processive ATP-dependent bidirectional helicase activity. Unwinds dsDNA until it encounters a Chi (crossover hotspot instigator) sequence from the 3' direction. Cuts ssDNA a few nucleotides 3' to the Chi site. The properties and activities of the enzyme are changed at Chi. The Chi-altered holoenzyme produces a long 3'-ssDNA overhang and facilitates RecA-binding to the ssDNA for homologous DNA recombination and repair. Holoenzyme degrades any linearized DNA that is unable to undergo homologous recombination. In the holoenzyme this subunit contributes ATPase, 3'-5' helicase, exonuclease activity and loads RecA onto ssDNA. This Buchnera aphidicola subsp. Schizaphis graminum (strain Sg) protein is RecBCD enzyme subunit RecB.